The following is a 160-amino-acid chain: uncharacterized protein (160 aa).

An N-terminal signal peptide occupies residues 1–25 (MKVTLLLLLIAVLLLLLIFMKVCKQ).

This is an uncharacterized protein from Invertebrate iridescent virus 6 (IIV-6).